The chain runs to 200 residues: Probable molybdenum cofactor guanylyltransferase (200 aa).

GTP is bound by residues 9-11, Lys-21, Asp-69, and Asp-100; that span reads LAG. Residue Asp-100 participates in Mg(2+) binding.

It belongs to the MobA family. Mg(2+) is required as a cofactor.

Its subcellular location is the cytoplasm. The catalysed reaction is Mo-molybdopterin + GTP + H(+) = Mo-molybdopterin guanine dinucleotide + diphosphate. Transfers a GMP moiety from GTP to Mo-molybdopterin (Mo-MPT) cofactor (Moco or molybdenum cofactor) to form Mo-molybdopterin guanine dinucleotide (Mo-MGD) cofactor. This chain is Probable molybdenum cofactor guanylyltransferase, found in Bacillus cereus (strain Q1).